The primary structure comprises 609 residues: Phosphoenolpyruvate carboxykinase [GTP] (609 aa).

Residues arginine 81 and 220-222 (YGG) each bind substrate. Mn(2+) is bound by residues lysine 229 and histidine 249. Serine 271 serves as a coordination point for substrate. 272 to 277 (ACGKTN) provides a ligand contact to GTP. The active site involves cysteine 273. A Mn(2+)-binding site is contributed by aspartate 296. 387 to 389 (NSR) contributes to the substrate binding site. GTP-binding positions include arginine 389, arginine 420, and 515–518 (FGEN).

Belongs to the phosphoenolpyruvate carboxykinase [GTP] family. In terms of assembly, monomer. Requires Mn(2+) as cofactor.

The protein localises to the cytoplasm. It catalyses the reaction oxaloacetate + GTP = phosphoenolpyruvate + GDP + CO2. It functions in the pathway carbohydrate biosynthesis; gluconeogenesis. Catalyzes the conversion of oxaloacetate (OAA) to phosphoenolpyruvate (PEP), the rate-limiting step in the metabolic pathway that produces glucose from lactate and other precursors derived from the citric acid cycle. The sequence is that of Phosphoenolpyruvate carboxykinase [GTP] from Mycobacterium leprae (strain Br4923).